The primary structure comprises 126 residues: MARLSGVDLPREKRVEIALTYIFGIGRTRSRETLAATGVNPDTRVRDLSEDEIVRLREWIDANYRVEGDLNREIKQDIRRKMEIGCYQGLRHRRNLPVHGQRTHTNARTRKGPRRAIAGKKKAGKK.

Positions 96–126 (LPVHGQRTHTNARTRKGPRRAIAGKKKAGKK) are disordered.

It belongs to the universal ribosomal protein uS13 family. In terms of assembly, part of the 30S ribosomal subunit. Forms a loose heterodimer with protein S19. Forms two bridges to the 50S subunit in the 70S ribosome.

Located at the top of the head of the 30S subunit, it contacts several helices of the 16S rRNA. In the 70S ribosome it contacts the 23S rRNA (bridge B1a) and protein L5 of the 50S subunit (bridge B1b), connecting the 2 subunits; these bridges are implicated in subunit movement. Contacts the tRNAs in the A and P-sites. The protein is Small ribosomal subunit protein uS13 of Frankia alni (strain DSM 45986 / CECT 9034 / ACN14a).